The sequence spans 160 residues: SUMO-conjugating enzyme SCE1 (160 aa).

At A2 the chain carries N-acetylalanine. The 154-residue stretch at 5–158 (IARGRLAEER…VKLQSKQYPA (154 aa)) folds into the UBC core domain. C94 (glycyl thioester intermediate) is an active-site residue.

It belongs to the ubiquitin-conjugating enzyme family. In terms of assembly, interacts with SIZ1 (via PHD domain) and MMS21. Interacts with TCP14 and TCP15. Interacts with KIN10.

Its pathway is protein modification; protein sumoylation. In terms of biological role, SUMO-conjugating enzyme that accepts the SUMO proteins from the E1 SUMO-activating heterodimer SAE1/SAE2 and catalyzes its covalent attachment to other proteins with the E3 SUMO ligases SIZ1 and MMS21. Associates with SIZ1 for sumoylation of the transcription factor GTE3. The sequence is that of SUMO-conjugating enzyme SCE1 (SCE1) from Arabidopsis thaliana (Mouse-ear cress).